The primary structure comprises 227 residues: Cytochrome c oxidase subunit 2 (227 aa).

The Mitochondrial intermembrane portion of the chain corresponds to 1-14 (MAHAAQVGLQDATS). Residues 15-45 (PIMEELIIFHDHALMIIFLICFLVLYALFLT) traverse the membrane as a helical segment. The Mitochondrial matrix portion of the chain corresponds to 46-59 (LTTKLTNTSISDAQ). A helical membrane pass occupies residues 60 to 87 (EMETVWTILPAIILVLIALPSLRILYMT). The Mitochondrial intermembrane segment spans residues 88-227 (DEVNDPSFTI…IFEMGPVFTL (140 aa)). Positions 161, 196, 198, 200, 204, and 207 each coordinate Cu cation. Mg(2+) is bound at residue E198.

This sequence belongs to the cytochrome c oxidase subunit 2 family. As to quaternary structure, component of the cytochrome c oxidase (complex IV, CIV), a multisubunit enzyme composed of 14 subunits. The complex is composed of a catalytic core of 3 subunits MT-CO1, MT-CO2 and MT-CO3, encoded in the mitochondrial DNA, and 11 supernumerary subunits COX4I, COX5A, COX5B, COX6A, COX6B, COX6C, COX7A, COX7B, COX7C, COX8 and NDUFA4, which are encoded in the nuclear genome. The complex exists as a monomer or a dimer and forms supercomplexes (SCs) in the inner mitochondrial membrane with NADH-ubiquinone oxidoreductase (complex I, CI) and ubiquinol-cytochrome c oxidoreductase (cytochrome b-c1 complex, complex III, CIII), resulting in different assemblies (supercomplex SCI(1)III(2)IV(1) and megacomplex MCI(2)III(2)IV(2)). Found in a complex with TMEM177, COA6, COX18, COX20, SCO1 and SCO2. Interacts with TMEM177 in a COX20-dependent manner. Interacts with COX20. Interacts with COX16. Requires Cu cation as cofactor.

It localises to the mitochondrion inner membrane. The enzyme catalyses 4 Fe(II)-[cytochrome c] + O2 + 8 H(+)(in) = 4 Fe(III)-[cytochrome c] + 2 H2O + 4 H(+)(out). Functionally, component of the cytochrome c oxidase, the last enzyme in the mitochondrial electron transport chain which drives oxidative phosphorylation. The respiratory chain contains 3 multisubunit complexes succinate dehydrogenase (complex II, CII), ubiquinol-cytochrome c oxidoreductase (cytochrome b-c1 complex, complex III, CIII) and cytochrome c oxidase (complex IV, CIV), that cooperate to transfer electrons derived from NADH and succinate to molecular oxygen, creating an electrochemical gradient over the inner membrane that drives transmembrane transport and the ATP synthase. Cytochrome c oxidase is the component of the respiratory chain that catalyzes the reduction of oxygen to water. Electrons originating from reduced cytochrome c in the intermembrane space (IMS) are transferred via the dinuclear copper A center (CU(A)) of subunit 2 and heme A of subunit 1 to the active site in subunit 1, a binuclear center (BNC) formed by heme A3 and copper B (CU(B)). The BNC reduces molecular oxygen to 2 water molecules using 4 electrons from cytochrome c in the IMS and 4 protons from the mitochondrial matrix. This Pan troglodytes (Chimpanzee) protein is Cytochrome c oxidase subunit 2 (MT-CO2).